Consider the following 541-residue polypeptide: Protein yellow (541 aa).

The signal sequence occupies residues 1–21; that stretch reads MFQDKGWILVTLITLVTPSWA. 2 N-linked (GlcNAc...) asparagine glycosylation sites follow: Asn-144 and Asn-215. The interval 443–463 is disordered; it reads QKPQTSWASSPPPPSRTYLPA.

The protein belongs to the major royal jelly protein family.

The protein resides in the secreted. In terms of biological role, controls the pigmentation pattern of the adult cuticle and larval mouth parts. The protein is Protein yellow (y) of Drosophila melanogaster (Fruit fly).